A 121-amino-acid chain; its full sequence is MEPNQQRSCGSSSDSSATGTPQGSNVAVWRPWHDAPRTHVQNPPTAQQQFYSDNQSHMNDKGKPPSFQHPVKLFWPKSRCYDFMYQEAEELLRHFPVQATISLYQETDSDSDSEEEDIYEN.

Residues 1–69 form a disordered region; sequence MEPNQQRSCG…DKGKPPSFQH (69 aa). The WRPW motif signature appears at 29–32; sequence WRPW. The span at 39–57 shows a compositional bias: polar residues; that stretch reads HVQNPPTAQQQFYSDNQSH. A ripply homology domain region spans residues 69-104; that stretch reads HPVKLFWPKSRCYDFMYQEAEELLRHFPVQATISLY.

The protein belongs to the ripply family. As to expression, expressed in the presomitic mesoderm (PSM) in the anterior halves of somitomeres S-0, S-I and S-II and in the newly formed somites.

It localises to the nucleus. Required during somitogenesis to regulate somite differentiation and the positioning of the presomitic mesoderm-front. Represses the expression of genes involved in somite segmentation by acting with the corepressor tle4 to down-regulate the transcriptional activity of tbx6. Also regulates retinoic acid signaling during somitogenesis and is necessary for the expression of aldh1a2/raldh2. The protein is Protein ripply2.1 (ripply2.1) of Xenopus laevis (African clawed frog).